Here is a 310-residue protein sequence, read N- to C-terminus: tRNA pseudouridine synthase B (310 aa).

D47 serves as the catalytic Nucleophile.

The protein belongs to the pseudouridine synthase TruB family. Type 1 subfamily.

It carries out the reaction uridine(55) in tRNA = pseudouridine(55) in tRNA. In terms of biological role, responsible for synthesis of pseudouridine from uracil-55 in the psi GC loop of transfer RNAs. The chain is tRNA pseudouridine synthase B from Caulobacter vibrioides (strain ATCC 19089 / CIP 103742 / CB 15) (Caulobacter crescentus).